The following is a 255-amino-acid chain: Mediator of RNA polymerase II transcription subunit 18 (255 aa).

Belongs to the Mediator complex subunit 18 family. As to quaternary structure, component of the Mediator complex.

The protein localises to the nucleus. In terms of biological role, component of the Mediator complex, a coactivator involved in the regulated transcription of nearly all RNA polymerase II-dependent genes. Mediator functions as a bridge to convey information from gene-specific regulatory proteins to the basal RNA polymerase II transcription machinery. Mediator is recruited to promoters by direct interactions with regulatory proteins and serves as a scaffold for the assembly of a functional preinitiation complex with RNA polymerase II and the general transcription factors. The chain is Mediator of RNA polymerase II transcription subunit 18 (SRB5) from Kluyveromyces lactis (strain ATCC 8585 / CBS 2359 / DSM 70799 / NBRC 1267 / NRRL Y-1140 / WM37) (Yeast).